The primary structure comprises 311 residues: Aspartate carbamoyltransferase catalytic subunit (311 aa).

Positions 59 and 60 each coordinate carbamoyl phosphate. Residue lysine 87 coordinates L-aspartate. Carbamoyl phosphate-binding residues include arginine 109, histidine 139, and glutamine 142. The L-aspartate site is built by arginine 172 and arginine 224. Carbamoyl phosphate is bound by residues alanine 265 and proline 266.

This sequence belongs to the aspartate/ornithine carbamoyltransferase superfamily. ATCase family. As to quaternary structure, heterododecamer (2C3:3R2) of six catalytic PyrB chains organized as two trimers (C3), and six regulatory PyrI chains organized as three dimers (R2).

It catalyses the reaction carbamoyl phosphate + L-aspartate = N-carbamoyl-L-aspartate + phosphate + H(+). The protein operates within pyrimidine metabolism; UMP biosynthesis via de novo pathway; (S)-dihydroorotate from bicarbonate: step 2/3. Its function is as follows. Catalyzes the condensation of carbamoyl phosphate and aspartate to form carbamoyl aspartate and inorganic phosphate, the committed step in the de novo pyrimidine nucleotide biosynthesis pathway. This Streptococcus pyogenes serotype M12 (strain MGAS2096) protein is Aspartate carbamoyltransferase catalytic subunit.